The following is a 362-amino-acid chain: 3-dehydroquinate synthase (362 aa).

It belongs to the archaeal-type DHQ synthase family.

The enzyme catalyses 2-amino-2,3,7-trideoxy-D-lyxo-hept-6-ulosonate + NAD(+) + H2O = 3-dehydroquinate + NH4(+) + NADH + H(+). Functionally, catalyzes the oxidative deamination and cyclization of 2-amino-3,7-dideoxy-D-threo-hept-6-ulosonic acid (ADH) to yield 3-dehydroquinate (DHQ), which is fed into the canonical shikimic pathway of aromatic amino acid biosynthesis. This Methanothrix thermoacetophila (strain DSM 6194 / JCM 14653 / NBRC 101360 / PT) (Methanosaeta thermophila) protein is 3-dehydroquinate synthase.